We begin with the raw amino-acid sequence, 249 residues long: Mediator of RNA polymerase II transcription subunit 8 (249 aa).

Positions 154–200 (LEEREMGIQNVVTGLRRQLEDEDEEASESEEEVEEEEMEVVGVRRRS) form a coiled coil. The tract at residues 170-249 (RQLEDEDEEA…MTTGIPPTQR (80 aa)) is disordered. Over residues 173-192 (EDEDEEASESEEEVEEEEME) the composition is skewed to acidic residues. Residues 211–232 (AAPAPGSRQQQQQQKAAGPAVP) are compositionally biased toward low complexity.

The protein belongs to the Mediator complex subunit 8 family. As to quaternary structure, component of the Mediator complex.

It is found in the nucleus. Functionally, component of the Mediator complex, a coactivator involved in the regulated transcription of nearly all RNA polymerase II-dependent genes. Mediator functions as a bridge to convey information from gene-specific regulatory proteins to the basal RNA polymerase II transcription machinery. Mediator is recruited to promoters by direct interactions with regulatory proteins and serves as a scaffold for the assembly of a functional preinitiation complex with RNA polymerase II and the general transcription factors. This chain is Mediator of RNA polymerase II transcription subunit 8 (med8), found in Aspergillus fumigatus (strain ATCC MYA-4609 / CBS 101355 / FGSC A1100 / Af293) (Neosartorya fumigata).